A 103-amino-acid polypeptide reads, in one-letter code: Flagellar hook-basal body complex protein FliE (103 aa).

The protein belongs to the FliE family.

The protein localises to the bacterial flagellum basal body. In Photorhabdus laumondii subsp. laumondii (strain DSM 15139 / CIP 105565 / TT01) (Photorhabdus luminescens subsp. laumondii), this protein is Flagellar hook-basal body complex protein FliE.